The sequence spans 652 residues: Phosphatidylinositol-binding clathrin assembly protein (652 aa).

The residue at position 2 (serine 2) is an N-acetylserine. In terms of domain architecture, ENTH spans 14-145 (QHSVTGSAVS…VSYRQVAFDF (132 aa)). Serine 16 and serine 20 each carry phosphoserine. The tract at residues 221-294 (KYFDMKKNQC…LEGKKIKDST (74 aa)) is interaction with PIMREG. Lysine 238 participates in a covalent cross-link: Glycyl lysine isopeptide (Lys-Gly) (interchain with G-Cter in SUMO2). Serine 303 and serine 315 each carry phosphoserine. The segment at 559-580 (KNDVNWSQPGEKKLTGGSNWQP) is disordered.

It belongs to the PICALM/SNAP91 family. As to quaternary structure, binds to clathrin; involves primarily the C-terminal sequences, but the full-length protein is required for full binding capacity. Binds phosphatidylinositol 4,5- bisphosphate. Interacts with PIMREG; this interaction may change the subcellular location into the nucleus. Interacts with AP2A1 (via its alpha-appendage domain). Interacts (via N-terminus) with VAMP2; VAMP3; VAMP7 and VAMP8 (Via N-terminus). Interacts with LC3/MAP1LC3A. Expressed in all tissues examined.

The protein resides in the cell membrane. The protein localises to the membrane. It localises to the clathrin-coated pit. It is found in the golgi apparatus. Its subcellular location is the cytoplasmic vesicle. The protein resides in the clathrin-coated vesicle. The protein localises to the nucleus. Cytoplasmic adapter protein that plays a critical role in clathrin-mediated endocytosis which is important in processes such as internalization of cell receptors, synaptic transmission or removal of apoptotic cells. Recruits AP-2 and attaches clathrin triskelions to the cytoplasmic side of plasma membrane leading to clathrin-coated vesicles (CCVs) assembly. Furthermore, regulates clathrin-coated vesicle size and maturation by directly sensing and driving membrane curvature. In addition to binding to clathrin, mediates the endocytosis of small R-SNARES (Soluble NSF Attachment Protein REceptors) between plasma membranes and endosomes including VAMP2, VAMP3, VAMP4, VAMP7 or VAMP8. In turn, PICALM-dependent SNARE endocytosis is required for the formation and maturation of autophagic precursors. Modulates thereby autophagy and the turnover of autophagy substrates such as MAPT/TAU or amyloid precursor protein cleaved C-terminal fragment (APP-CTF). The protein is Phosphatidylinositol-binding clathrin assembly protein (PICALM) of Homo sapiens (Human).